Reading from the N-terminus, the 64-residue chain is Large ribosomal subunit protein bL28 (64 aa).

This sequence belongs to the bacterial ribosomal protein bL28 family.

The protein is Large ribosomal subunit protein bL28 of Persephonella marina (strain DSM 14350 / EX-H1).